The chain runs to 356 residues: Protein-glutamate methylesterase/protein-glutamine glutaminase 2 (356 aa).

In terms of domain architecture, Response regulatory spans 7 to 124 (KVLCVDDSAL…RDGLMEYTDT (118 aa)). Aspartate 58 bears the 4-aspartylphosphate mark. The 193-residue stretch at 157–349 (LLSTEKLIIL…QRVMARLATY (193 aa)) folds into the CheB-type methylesterase domain. Catalysis depends on residues serine 169, histidine 195, and aspartate 291.

This sequence belongs to the CheB family. In terms of processing, phosphorylated by CheA. Phosphorylation of the N-terminal regulatory domain activates the methylesterase activity.

The protein resides in the cytoplasm. It carries out the reaction [protein]-L-glutamate 5-O-methyl ester + H2O = L-glutamyl-[protein] + methanol + H(+). It catalyses the reaction L-glutaminyl-[protein] + H2O = L-glutamyl-[protein] + NH4(+). Its function is as follows. Involved in chemotaxis. Part of a chemotaxis signal transduction system that modulates chemotaxis in response to various stimuli. Catalyzes the demethylation of specific methylglutamate residues introduced into the chemoreceptors (methyl-accepting chemotaxis proteins or MCP) by CheR. Also mediates the irreversible deamidation of specific glutamine residues to glutamic acid. This is Protein-glutamate methylesterase/protein-glutamine glutaminase 2 from Cupriavidus pinatubonensis (strain JMP 134 / LMG 1197) (Cupriavidus necator (strain JMP 134)).